The sequence spans 750 residues: Tyrosine-protein phosphatase 2 (750 aa).

Residues 1–20 are disordered; that stretch reads MDRIAQQYRNGKRDNNGNRM. Ser-258 is subject to Phosphoserine. Disordered stretches follow at residues 327–348 and 425–450; these read LHQK…SKLY and VKLP…DKSY. Positions 330-348 are enriched in polar residues; sequence KQLSQKQRGPQSTDDSKLY. One can recognise a Tyrosine-protein phosphatase domain in the interval 383–737; sequence SPSPLSSDDT…IACYEALLNY (355 aa). Ser-430 carries the post-translational modification Phosphoserine. Residue Cys-666 is the Phosphocysteine intermediate of the active site.

It belongs to the protein-tyrosine phosphatase family. Non-receptor class subfamily. As to quaternary structure, interacts with HOG1.

The protein localises to the cytoplasm. The protein resides in the nucleus. The enzyme catalyses O-phospho-L-tyrosyl-[protein] + H2O = L-tyrosyl-[protein] + phosphate. In terms of biological role, major phosphatase responsible with PTP3 for tyrosine dephosphorylation of MAP kinase HOG1 to inactivate its activity. May also be involved in the regulation of MAP kinase FUS3. May be implicated in the ubiquitin-mediated protein degradation. This chain is Tyrosine-protein phosphatase 2 (PTP2), found in Saccharomyces cerevisiae (strain ATCC 204508 / S288c) (Baker's yeast).